We begin with the raw amino-acid sequence, 172 residues long: Translation initiation factor IF-3 (172 aa).

This sequence belongs to the IF-3 family. Monomer.

It is found in the cytoplasm. Its function is as follows. IF-3 binds to the 30S ribosomal subunit and shifts the equilibrium between 70S ribosomes and their 50S and 30S subunits in favor of the free subunits, thus enhancing the availability of 30S subunits on which protein synthesis initiation begins. The chain is Translation initiation factor IF-3 from Geobacillus stearothermophilus (Bacillus stearothermophilus).